The following is a 309-amino-acid chain: Voltage-dependent anion channel-forming protein mll4386 (309 aa).

3 helical membrane-spanning segments follow: residues 32–52 (ILPQ…LARW), 58–78 (GVFN…YLSF), and 227–247 (IVCL…TPLF).

Belongs to the anion channel-forming bestrophin (TC 1.A.46) family.

The protein localises to the cell membrane. This Mesorhizobium japonicum (strain LMG 29417 / CECT 9101 / MAFF 303099) (Mesorhizobium loti (strain MAFF 303099)) protein is Voltage-dependent anion channel-forming protein mll4386.